A 548-amino-acid chain; its full sequence is 5-epi-aristolochene synthase (548 aa).

(2E,6E)-farnesyl diphosphate contacts are provided by Arg264, Asp301, Asp305, Arg441, and Asp444. Positions 301 and 305 each coordinate Mg(2+). The short motif at 301–305 (DDTFD) is the DDXXD motif element. Mg(2+)-binding residues include Asp444, Asp445, Thr448, and Glu452.

Belongs to the terpene synthase family. In terms of assembly, monomer. Mg(2+) is required as a cofactor. Post-translationally, self-alkylated at Tyr-520 in the presence of (2Z,6E)-farnesyl diphosphate ((Z,E)-FPP). Self-alkylated at Asp-444 at warm temperature (42 degrees Celsius) in the presence of (2E,6E)-farnesyl diphosphate ((E,E)-FPP).

Its subcellular location is the cytoplasm. It carries out the reaction (2E,6E)-farnesyl diphosphate = (+)-5-epi-aristolochene + diphosphate. The enzyme catalyses (2Z,6E)-farnesyl diphosphate = (+)-2-epi-prezizaene + diphosphate. It catalyses the reaction (2Z,6E)-farnesyl diphosphate = (-)-alpha-cedrene + diphosphate. The catalysed reaction is (2Z,6E)-farnesyl diphosphate = (-)-beta-curcumene + diphosphate. It functions in the pathway secondary metabolite biosynthesis; terpenoid biosynthesis. With respect to regulation, inhibited activity toward farnesyl diphosphate (FPP) by anilinogeranyl diphosphate (AGPP); AGPP undergoes a cyclization event leading to the formation of a novel macrocyclic paracyclophane alkaloid. Repressed by sesquilavandulyl diphosphate (SPP) via the induction of self-alkyation. Its function is as follows. Catalyzes the cyclization of trans,trans-farnesyl diphosphate (FPP) to the bicyclic intermediate 5-epi-aristolochene, initial step in the conversion of FPP to the sesquiterpenoid antifungal phytoalexin capsidiol. Produces germacrene A as an enzyme-bound intermediate that is not released by the enzyme, but is further cyclized to produce the bicyclic 5-epi-aristolochene. Mediates, at low levels, the formation of 4-epi-eremophilene and premnaspirodiene from trans,trans-farnesyl diphosphate. Also mediates the conversion of cis,trans-farnesyl diphosphate to cisoid minor products such as (+)-2-epi-prezizaene, (-)-alpha-cedrene and, to a lesser extent, (-)-beta-curcumene; also produces, at low levels, alpha-acoradiene and 4-epi-alpha-acoradiene, but barely nerolidol, alpha-bisabolol, epi-alpha-bisabolol and cis-farnesol. The sequence is that of 5-epi-aristolochene synthase (EAS3) from Nicotiana tabacum (Common tobacco).